The primary structure comprises 324 residues: DNA-directed RNA polymerase subunit alpha (324 aa).

Residues 1–228 (MIEIQKPTIR…EHFNLFTDLS (228 aa)) form an alpha N-terminal domain (alpha-NTD) region. The tract at residues 245–324 (RNKLLDMTIE…STPKGEEEEK (80 aa)) is alpha C-terminal domain (alpha-CTD).

The protein belongs to the RNA polymerase alpha chain family. Homodimer. The RNAP catalytic core consists of 2 alpha, 1 beta, 1 beta' and 1 omega subunit. When a sigma factor is associated with the core the holoenzyme is formed, which can initiate transcription.

The catalysed reaction is RNA(n) + a ribonucleoside 5'-triphosphate = RNA(n+1) + diphosphate. Functionally, DNA-dependent RNA polymerase catalyzes the transcription of DNA into RNA using the four ribonucleoside triphosphates as substrates. The sequence is that of DNA-directed RNA polymerase subunit alpha from Caldicellulosiruptor saccharolyticus (strain ATCC 43494 / DSM 8903 / Tp8T 6331).